The chain runs to 962 residues: Villin-5 (962 aa).

Gelsolin-like repeat units lie at residues 29–79 (FKPV…DEAG), 150–190 (VRVK…QERA), 262–305 (GQTD…DQRK), 396–453 (LQVW…EDRA), 534–574 (MQAI…EDQE), and 636–677 (LKAT…KKKP). Positions 749–785 (KPKRRVPAYSSRSTVPDKSQPRSRSMTFSPDRARVRG) are disordered. Residues 758–776 (SSRSTVPDKSQPRSRSMTF) are compositionally biased toward polar residues. 2 positions are modified to phosphoserine: Ser-777 and Ser-787. Low complexity predominate over residues 845–862 (EKPTPTSQEPPTSPSSSE). A disordered region spans residues 845-917 (EKPTPTSQEP…LKTDSEDPVS (73 aa)). Residues 863–875 (ATNQAEAPKSTSE) show a composition bias toward polar residues. At Ser-883 the chain carries Phosphoserine. Acidic residues predominate over residues 889 to 898 (SKEEEAEEES). Positions 897–962 (ESSLPTFPYE…NKLKMSVNLF (66 aa)) constitute an HP domain.

This sequence belongs to the villin/gelsolin family. As to expression, ubiquitous, but expressed preferentially in pollen and stamens.

It localises to the cytoplasm. Its subcellular location is the cytoskeleton. Major actin filament stabilizing factor and regulator of actin dynamics. Binds actin and actin filament bundles in a Ca(2+)-insensitive manner, but caps the barbed end of actin filaments and is able to sever them in a calcium-dependent manner. Required for the construction of actin collars in pollen tubes. Acts synergistically with VLN2 (AC O81644) to regulate polarized pollen tube growth. This is Villin-5 from Arabidopsis thaliana (Mouse-ear cress).